Here is an 835-residue protein sequence, read N- to C-terminus: Lon protease (835 aa).

In terms of domain architecture, Lon N-terminal spans 4–224; sequence LPYIAIRNQL…LAINMLINAI (221 aa). Residue 412–419 coordinates ATP; sequence GPPGTGKT. The 184-residue stretch at 649–832 folds into the Lon proteolytic domain; the sequence is QPKAGVVNAL…DEIFKYIFEA (184 aa). Residues serine 738 and lysine 781 contribute to the active site.

This sequence belongs to the peptidase S16 family. Homohexamer. Organized in a ring with a central cavity.

Its subcellular location is the cytoplasm. The enzyme catalyses Hydrolysis of proteins in presence of ATP.. Functionally, ATP-dependent serine protease that mediates the selective degradation of mutant and abnormal proteins as well as certain short-lived regulatory proteins. Required for cellular homeostasis and for survival from DNA damage and developmental changes induced by stress. Degrades polypeptides processively to yield small peptide fragments that are 5 to 10 amino acids long. Binds to DNA in a double-stranded, site-specific manner. The protein is Lon protease of Metamycoplasma arthritidis (strain 158L3-1) (Mycoplasma arthritidis).